The chain runs to 161 residues: MQPTNFHDQLKFAWLAGFVDADGCINAQIVSREDYLLKYQVRVSLTVFQSTTRHFILLDIQKILGCGTVRKRNDGMSEFCVVGGTSLQTTLEKLLPYLQLKRAQAKLVLQIIKKLPNTKDPSVLMEAALLADKVGLLTDGKKRTILAENVRECLKKLGHVV.

Belongs to the LAGLIDADG endonuclease family.

The protein localises to the plastid. The protein resides in the chloroplast. Functionally, probable endonuclease involved in intron homing. This is DNA endonuclease I-CvuI from Chlorella vulgaris (Green alga).